A 59-amino-acid chain; its full sequence is Large ribosomal subunit protein uL30 (59 aa).

It belongs to the universal ribosomal protein uL30 family. As to quaternary structure, part of the 50S ribosomal subunit.

The polypeptide is Large ribosomal subunit protein uL30 (Streptococcus agalactiae serotype Ia (strain ATCC 27591 / A909 / CDC SS700)).